The sequence spans 260 residues: Large ribosomal subunit protein uL2 (260 aa).

The tract at residues 208-230 (EHPHGGGNHQHIGHPSTVRRDAS) is disordered.

Belongs to the universal ribosomal protein uL2 family.

It localises to the cytoplasm. The chain is Large ribosomal subunit protein uL2 from Caenorhabditis elegans.